The sequence spans 568 residues: Glucose-6-phosphate isomerase, cytosolic 1 (568 aa).

Glu360 acts as the Proton donor in catalysis. Catalysis depends on residues His391 and Lys516.

Belongs to the GPI family. In terms of assembly, homodimer.

The protein localises to the cytoplasm. The catalysed reaction is alpha-D-glucose 6-phosphate = beta-D-fructose 6-phosphate. It functions in the pathway carbohydrate degradation; glycolysis; D-glyceraldehyde 3-phosphate and glycerone phosphate from D-glucose: step 2/4. The chain is Glucose-6-phosphate isomerase, cytosolic 1 (PGIC1) from Clarkia xantiana (Gunsight clarkia).